The sequence spans 220 residues: Uracil-DNA glycosylase 1 (220 aa).

Aspartate 65 acts as the Proton acceptor in catalysis.

Belongs to the uracil-DNA glycosylase (UDG) superfamily. UNG family.

The protein resides in the cytoplasm. The enzyme catalyses Hydrolyzes single-stranded DNA or mismatched double-stranded DNA and polynucleotides, releasing free uracil.. Its function is as follows. Excises uracil residues from the DNA which can arise as a result of misincorporation of dUMP residues by DNA polymerase or due to deamination of cytosine. In Bacteroides fragilis (strain ATCC 25285 / DSM 2151 / CCUG 4856 / JCM 11019 / LMG 10263 / NCTC 9343 / Onslow / VPI 2553 / EN-2), this protein is Uracil-DNA glycosylase 1.